The following is a 504-amino-acid chain: Transcriptional coactivator YAP1 (504 aa).

Composition is skewed to pro residues over residues 1–12 (MDPGQQPPPQPA) and 20–36 (PSQPPQGQGPPSGPGQP). The disordered stretch occupies residues 1 to 59 (MDPGQQPPPQPAPQGQGQPPSQPPQGQGPPSGPGQPAPAATQAAPQAPPAGHQIVHVRG). Residues 37 to 51 (APAATQAAPQAPPAG) show a composition bias toward low complexity. Phosphoserine; by LATS1 and LATS2 is present on S61. T63 carries the phosphothreonine modification. The stretch at 86–100 (MRLRKLPDSFFKPPE) forms a coiled coil. K90 carries the post-translational modification N6-lactoyllysine. The segment at 91–114 (LPDSFFKPPEPKSHSRQASTDAGT) is disordered. Position 105 is a phosphoserine (S105). S109 bears the Phosphoserine; by LATS1 and LATS2 mark. T110 carries the post-translational modification Phosphothreonine. Residue T119 is modified to Phosphothreonine; by MAPK8 and MAPK9. S127 carries the phosphoserine; by LATS1 and LATS2 modification. Residues S128 and S131 each carry the phosphoserine modification. Residues 133 to 158 (QLGAVSPGTLTPTGVVSGPAATPTAQ) form a disordered region. S138 is modified (phosphoserine; by MAPK8 and MAPK9). The residue at position 154 (T154) is a Phosphothreonine; by MAPK8 and MAPK9. S164 is subject to Phosphoserine; by LATS1 and LATS2. 2 WW domains span residues 171–204 (VPLPAGWEMAKTSSGQRYFLNHIDQTTTWQDPRK) and 230–263 (GPLPDGWEQAMTQDGEIYYINHKNKTTSWLDPRL). Residues S274 and S289 each carry the phosphoserine modification. 2 disordered regions span residues 275–309 (QSAPVKQPPPLAPQSPQGGVMGGSNSNQQQQMRLQ) and 355–407 (LEQD…MSSY). The transactivation domain stretch occupies residues 291 to 504 (QGGVMGGSNS…LDKESFLTWL (214 aa)). Positions 298–359 (SNSNQQQQMR…SQLPTLEQDG (62 aa)) form a coiled coil. Positions 355-391 (LEQDGGTQNPVSSPGMSQELRTMTTNSSDPFLNSGTY) are enriched in polar residues. Position 367 is a phosphoserine; by MAPK8 and MAPK9 (S367). Residues S371, S381, S382, and S388 each carry the phosphoserine modification. Position 397 is a phosphoserine; by LATS1 and LATS2 (S397). S400 and S403 each carry phosphoserine; by CK1. A Phosphotyrosine; by ABL1 modification is found at Y407. T412 is subject to Phosphothreonine; by MAPK8 and MAPK9.

This sequence belongs to the YAP1 family. As to quaternary structure, part of a complex when phosphorylated that contains DSG3, PKP1, YAP1 and YWHAG; the complex is required for localization of DSG3 and YAP1 to the cell membrane in keratinocytes. Binds to the SH3 domain of the YES kinase. Binds to WBP1 and WBP2. Binds, in vitro, through the WW1 domain, to neural isoforms of ENAH that contain the PPSY motif. The phosphorylated form interacts with YWHAB. Interacts (via WW domains) with LATS1 (via PPxY motif 2). Interacts with LATS2. Interacts with TEAD1, TEAD2, TEAD3 and TEAD4. Interacts with TP73. Interacts with RUNX1. Interacts with HCK. Interacts (via WW domains) with PTPN14 (via PPxY motif 2); this interaction leads to the cytoplasmic sequestration of YAP1 and inhibits its transcriptional coactivator activity. Interacts (when phosphorylated at Ser-127) with SMAD2, SMAD3 and WWTR1. Interacts with PRRG2 (via cytoplasmic domain). Interacts (via WW domains) with PRRG4 (via cytoplasmic domain). Interacts (phosphorylated) with CLDN18; the interaction sequesters YAP1 away from the nucleus and thereby restricts transcription of YAP1 target genes. Interacts with SMAD1. Interacts with AMOTL2, the interaction is required for ubiquitination of AMOTL2 and localization of YAP1 to tight junctions. Interacts with AMOT isoform 1; the interaction facilitates translocation of YAP1 to the cytoplasm and tight junctions. Interacts (via WW domain 1) with isoform 3 of ERBB4 (via PPxY motif 2). In terms of processing, phosphorylated by LATS1 and LATS2; leading to cytoplasmic translocation and inactivation. Phosphorylated by ABL1; leading to YAP1 stabilization, enhanced interaction with TP73 and recruitment onto proapoptotic genes; in response to DNA damage. Phosphorylation at Ser-400 and Ser-403 by CK1 is triggered by previous phosphorylation at Ser-397 by LATS proteins and leads to YAP1 ubiquitination by SCF(beta-TRCP) E3 ubiquitin ligase and subsequent degradation. Phosphorylated at Thr-119, Ser-138, Thr-154, Ser-367 and Thr-412 by MAPK8/JNK1 and MAPK9/JNK2, which is required for the regulation of apoptosis by YAP1. Phosphorylated in the nucleus by PRP4K; phosphorylation leads to nuclear exclusion. Lactylation by AARS1 promotes nuclear localization and stabilization of YAP1, leading to increased Hippo signaling pathway. Delactylated by SIRT1. Post-translationally, ubiquitinated by SCF(beta-TRCP) E3 ubiquitin ligase. Increased expression seen in some liver and prostate cancers. Isoforms lacking the transactivation domain found in striatal neurons of patients with Huntington disease (at protein level).

It localises to the cytoplasm. It is found in the nucleus. The protein localises to the cell junction. The protein resides in the tight junction. Its subcellular location is the cell membrane. Functionally, transcriptional regulator with dual roles as a coactivator and corepressor. Critical downstream regulatory target in the Hippo signaling pathway, crucial for organ size control and tumor suppression by restricting proliferation and promoting apoptosis. The Hippo signaling pathway core involves a kinase cascade featuring STK3/MST2 and STK4/MST1, along with its regulatory partner SAV1, which phosphorylates and activates LATS1/2 in complex with their regulatory protein, MOB1. This activation leads to the phosphorylation and inactivation of the YAP1 oncoprotein and WWTR1/TAZ. Phosphorylation of YAP1 by LATS1/2 prevents its nuclear translocation, thereby regulating the expression of its target genes. The transcriptional regulation of gene expression requires TEAD transcription factors and modulates cell growth, anchorage-independent growth, and induction of epithelial-mesenchymal transition (EMT). Plays a key role in tissue tension and 3D tissue shape by regulating the cortical actomyosin network, acting via ARHGAP18, a Rho GTPase activating protein that suppresses F-actin polymerization. It also suppresses ciliogenesis by acting as a transcriptional corepressor of TEAD4 target genes AURKA and PLK1. In conjunction with WWTR1, regulates TGFB1-dependent SMAD2 and SMAD3 nuclear accumulation. Synergizes with WBP2 to enhance PGR activity. Its function is as follows. Activates the C-terminal fragment (CTF) of ERBB4 (isoform 3). The protein is Transcriptional coactivator YAP1 of Homo sapiens (Human).